The chain runs to 1396 residues: Sterol 3-beta-glucosyltransferase (1396 aa).

Over residues 1–16 (MRPLLDEAKRRVDRRL) the composition is skewed to basic and acidic residues. 3 disordered regions span residues 1–59 (MRPL…TKEG), 82–193 (HARF…AAPV), and 206–233 (SKGS…TSAS). Residues 18 to 28 (ASRQSLSTSRI) are compositionally biased toward polar residues. 2 stretches are compositionally biased toward basic and acidic residues: residues 35–44 (ERLKDDHDAQ) and 82–108 (HARF…KESQ). Positions 156 to 175 (GSSQRQGGAQTEPSTGNQMS) are enriched in polar residues. Positions 237 to 288 (LRLMEMFGFESPEKVLVEYACSLVQSMLLQGYMYVTEGHICFYAYLPRKSTV) constitute a GRAM 1 domain. Positions 289 to 387 (AIKSGYLYKR…WVKSLQKVIF (99 aa)) constitute a PH domain. Polar residues-rich tracts occupy residues 459–479 (QAKN…QSRA) and 487–497 (SLTSGLSQVLG). Disordered regions lie at residues 459–531 (QAKN…RDLS) and 576–635 (FRRQ…VQQS). Over residues 585-595 (QFGRRHSDETA) the composition is skewed to basic and acidic residues. The region spanning 719-785 (DRFRAHFALP…KDVENVEKEK (67 aa)) is the GRAM 2 domain. The disordered stretch occupies residues 841–880 (EQDESEAAKAEHRMLQEARKDASGGLIPQTPSDESPEIHP). A compositionally biased stretch (basic and acidic residues) spans 846-862 (EAAKAEHRMLQEARKDA). The UDP-alpha-D-glucose site is built by serine 907, arginine 908, aspartate 910, alanine 1210, histidine 1212, histidine 1225, glycine 1229, threonine 1230, aspartate 1249, and glutamine 1250.

It belongs to the glycosyltransferase 28 family.

Its subcellular location is the cytoplasm. The protein resides in the preautophagosomal structure membrane. The catalysed reaction is a sterol + UDP-alpha-D-glucose = a sterol 3-beta-D-glucoside + UDP + H(+). The enzyme catalyses ergosterol + UDP-alpha-D-glucose = ergosteryl 3-beta-D-glucoside + UDP + H(+). Its function is as follows. Sterol glycosyltransferase responsible for the glycosylation of ergosterol to form ergosterol-glucoside. The protein is Sterol 3-beta-glucosyltransferase of Aspergillus terreus (strain NIH 2624 / FGSC A1156).